The primary structure comprises 705 residues: Dolichyl-diphosphooligosaccharide--protein glycosyltransferase subunit STT3A (705 aa).

Topologically, residues 1–17 (MTKLGFLRLSYEKQDTL) are cytoplasmic. A helical membrane pass occupies residues 18 to 38 (LKLLILSMAAVLSFSTRLFAV). At 39–119 (LRFESVIHEF…IDIRNVCVFL (81 aa)) the chain is on the lumenal side. The short motif at 47 to 49 (EFD) is the DXD motif 1 element. Aspartate 49 lines the Mn(2+) pocket. A helical membrane pass occupies residues 120–138 (APLFSSFTTIVTYHLTKEL). At 139–140 (KD) the chain is on the cytoplasmic side. The helical transmembrane segment at 141–158 (AGAGLLAAAMIAVVPGYI) threads the bilayer. At 159–169 (SRSVAGSYDNE) the chain is on the lumenal side. Mn(2+) is bound by residues aspartate 167 and glutamate 169. Positions 167-169 (DNE) match the DXD motif 2 motif. The chain crosses the membrane as a helical span at residues 170–189 (GIAIFCMLLTYYMWIKAVKT). Topologically, residues 190–191 (GS) are cytoplasmic. The helical transmembrane segment at 192–206 (IYWAAKCALAYFYMV) threads the bilayer. The Lumenal portion of the chain corresponds to 207-211 (SSWGG). A helical membrane pass occupies residues 212–228 (YVFLINLIPLHVLVLML). Residues 229–233 (TGRFS) are Cytoplasmic-facing. A helical transmembrane segment spans residues 234–259 (HRIYVAYCTVYCLGTILSMQISFVGF). Residues 260–267 (QPVLSSEH) are Lumenal-facing. A helical transmembrane segment spans residues 268–287 (MAAFGVFGLCQIHAFVDYLR). Topologically, residues 288–300 (SKLNPQQFEVLFR) are cytoplasmic. The chain crosses the membrane as a helical span at residues 301–321 (SVISLVGFVLLTIGALLMLTG). The Lumenal segment spans residues 322-356 (KISPWTGRFYSLLDPSYAKNNIPIIASVSEHQPTT). The SVSE motif motif lies at 348 to 351 (SVSE). The helical transmembrane segment at 357-379 (WSSYYFDLQLLVFMFPVGLYYCF) threads the bilayer. Over 380–385 (SNLSDA) the chain is Cytoplasmic. A helical transmembrane segment spans residues 386-402 (RIFIIMYGVTSMYFSAV). The Lumenal portion of the chain corresponds to 403 to 406 (MVRL). Arginine 405 provides a ligand contact to dolichyl diphosphooligosaccharide. A helical membrane pass occupies residues 407-428 (MLVLAPVMCILSGIGVSQVLST). Residues 429–453 (YMKNLDISRQDKKSKKQQDSTYPIK) are Cytoplasmic-facing. A helical transmembrane segment spans residues 454–473 (NEVASGMILVMAFFLITYTF). Over 474–705 (HSTWVTSEAY…DLDNRGLSRT (232 aa)) the chain is Lumenal. The tract at residues 525-527 (WWD) is interacts with target acceptor peptide in protein substrate. The WWDYG motif motif lies at 525-529 (WWDYG). Position 530 (tyrosine 530) interacts with dolichyl diphosphooligosaccharide. Residues asparagine 537 and asparagine 544 are each glycosylated (N-linked (GlcNAc...) asparagine). N-linked (GlcNAc...) (high mannose) asparagine glycosylation occurs at asparagine 548. Positions 592 to 599 (DINKFLWM) match the DK motif motif.

Belongs to the STT3 family. Component of the oligosaccharyltransferase (OST) complex. There are 2 OST complexes, OST-A and OST-B, which contain STT3A or STT3B as catalytic subunit, respectively. OST-A and OST-B contain common core subunits RPN1, RPN2, OST48, OST4, DAD1 and TMEM258, and OST-A contains DC2/OSTC and KRTCAP2/KCP2 specific accessory subunits. OST-A complex assembly occurs through the formation of 3 subcomplexes. Subcomplex 1 contains RPN1 and TMEM258, subcomplex 2 contains the OST-A-specific subunits STT3A, DC2/OSTC, and KCP2 as well as the core subunit OST4, and subcomplex 3 contains RPN2, DAD1, and OST48. The OST-A complex can form stable complexes with the Sec61 complex or with both the Sec61 and TRAP complexes. Mg(2+) is required as a cofactor. It depends on Mn(2+) as a cofactor.

Its subcellular location is the endoplasmic reticulum membrane. The catalysed reaction is a di-trans,poly-cis-dolichyl diphosphooligosaccharide + L-asparaginyl-[protein] = N(4)-(oligosaccharide-(1-&gt;4)-N-acetyl-beta-D-glucosaminyl-(1-&gt;4)-N-acetyl-beta-D-glucosaminyl)-L-asparaginyl-[protein] + a di-trans,poly-cis-dolichyl diphosphate + H(+). It participates in protein modification; protein glycosylation. Its function is as follows. Catalytic subunit of the oligosaccharyl transferase (OST) complex that catalyzes the initial transfer of a defined glycan (Glc(3)Man(9)GlcNAc(2) in eukaryotes) from the lipid carrier dolichol-pyrophosphate to an asparagine residue within an Asn-X-Ser/Thr consensus motif in nascent polypeptide chains, the first step in protein N-glycosylation. N-glycosylation occurs cotranslationally and the complex associates with the Sec61 complex at the channel-forming translocon complex that mediates protein translocation across the endoplasmic reticulum (ER). All subunits are required for a maximal enzyme activity. This subunit contains the active site and the acceptor peptide and donor lipid-linked oligosaccharide (LLO) binding pockets. STT3A is present in the majority of OST complexes and mediates cotranslational N-glycosylation of most sites on target proteins, while STT3B-containing complexes are required for efficient post-translational glycosylation and mediate glycosylation of sites that have been skipped by STT3A. STT3A-containing OST-A complex is also required to prevent hyperglycosylation of some target proteins by preventing glycosylation of facultative sites before folding of target proteins is completed. This chain is Dolichyl-diphosphooligosaccharide--protein glycosyltransferase subunit STT3A, found in Bos taurus (Bovine).